Consider the following 234-residue polypeptide: Sugar fermentation stimulation protein A (234 aa).

The H-T-H motif DNA-binding region spans 201-220; sequence LLSEAQQRGVEILAYKAEIS.

The protein belongs to the SfsA family.

Functionally, binds to DNA non-specifically. Could be a regulatory factor involved in maltose metabolism. This is Sugar fermentation stimulation protein A from Shigella dysenteriae serotype 1 (strain Sd197).